Reading from the N-terminus, the 142-residue chain is Translation initiation factor 2 subunit beta (142 aa).

This sequence belongs to the eIF-2-beta/eIF-5 family. Heterotrimer composed of an alpha, a beta and a gamma chain.

In terms of biological role, eIF-2 functions in the early steps of protein synthesis by forming a ternary complex with GTP and initiator tRNA. The sequence is that of Translation initiation factor 2 subunit beta from Thermococcus gammatolerans (strain DSM 15229 / JCM 11827 / EJ3).